The following is a 300-amino-acid chain: MAEKNRLVTVAALQFACTDDVSTNVATAERLVRAAHQKGANIILIQELFEGYYFCQAQKEEFFHRAKPYLGHPTIVRMQNLAKELGVVIPVSFFEEANNAHYNSVAIIDADGTDLGLYRKSHIPDGPGYQEKFYFNPGDTGFKVFQTKYAKIGVAICWDQWFPEAARAMALQGAEVLFYPTAIGSEPQDDGLDSRDHWRRVMQGHAGANVVPLVASNRIGKEIIETEHGNSEITFYGYSFIAGPTGELVAAAGDKEEAVLVAQFDLDKIKSKRHGWGVYRDRRPDLYKVLLTLDGSNPVK.

The CN hydrolase domain maps to 8–266 (VTVAALQFAC…EAVLVAQFDL (259 aa)). The active-site Proton acceptor is the E47. K120 (proton donor) is an active-site residue. C157 (nucleophile) is an active-site residue.

Belongs to the carbon-nitrogen hydrolase superfamily. Homooctamer.

It carries out the reaction N-carbamoylputrescine + H2O + 2 H(+) = putrescine + NH4(+) + CO2. Its pathway is amine and polyamine biosynthesis; putrescine biosynthesis via agmatine pathway; putrescine from N-carbamoylputrescine (amidase route): step 1/1. Its function is as follows. Involved in polyamine biosynthesis. The chain is N-carbamoylputrescine amidase (CPA) from Solanum tuberosum (Potato).